A 412-amino-acid polypeptide reads, in one-letter code: Argininosuccinate synthase (412 aa).

Residues alanine 20–serine 28 and alanine 48 contribute to the ATP site. Tyrosine 100 and serine 105 together coordinate L-citrulline. Glycine 130 provides a ligand contact to ATP. L-aspartate is bound by residues threonine 132, asparagine 136, and aspartate 137. Residue asparagine 136 participates in L-citrulline binding. Arginine 140, serine 189, serine 198, glutamate 274, and tyrosine 286 together coordinate L-citrulline.

This sequence belongs to the argininosuccinate synthase family. Type 1 subfamily. In terms of assembly, homotetramer.

It is found in the cytoplasm. The catalysed reaction is L-citrulline + L-aspartate + ATP = 2-(N(omega)-L-arginino)succinate + AMP + diphosphate + H(+). It functions in the pathway amino-acid biosynthesis; L-arginine biosynthesis; L-arginine from L-ornithine and carbamoyl phosphate: step 2/3. This Shewanella pealeana (strain ATCC 700345 / ANG-SQ1) protein is Argininosuccinate synthase.